The sequence spans 496 residues: Cytochrome P450 monooxygenase cle4 (496 aa).

A helical transmembrane segment spans residues 12–34; that stretch reads FFTSPFPLTVGILSISLSGVLWY. Cysteine 435 contributes to the heme binding site.

This sequence belongs to the cytochrome P450 family. Heme serves as cofactor.

It localises to the membrane. Its pathway is secondary metabolite biosynthesis; terpenoid biosynthesis. In terms of biological role, cytochrome P450 monooxygenase; part of the cluster A that mediates the biosynthesis of chevalone E and its oxidized derivatives that possess a unique five-membered lactone ring and can synergistically enhance the cytotoxicity of doxorubicin (DOX) in breast cancer cells. Within the pathway, cle4 is involved in hydroxylation of the chavalone E scaffold at positions C-11 and C-12 and contributes with cle2 to the production of seven oxidation derivatives. The molecular scaffold is commonly biosynthesized by a series of enzymes including the non-reducing polyketide synthase (NR-PKS) cle1 that produces the alpha-pyrone triacetic acid lactone (TAL); The membrane-bound prenyltransferase cle5 that accepts TAL as its substrate to perform a C-3 geranylgeranylation reaction, in which the pathway-dedicated GGPS cle6 is required to provide GGPP, the other substrate of cle5; the FAD-dependent monooxygenase Cle3 that forms an (S)-epoxide ring at the terminal olefin of the geranylgeranyl group; and the terpene cyclase Cle7 that catalyzes the cyclization of the prenyl group that yields the pentacyclic pathway intermediate chevalone E. Chevalone E can derivatize into seven new oxidized analogs by the cytochrome P450 monooxygenases cle2 (acting at C-20) and cle4 (acting at C-11 and C-12). In Aspergillus versicolor, this protein is Cytochrome P450 monooxygenase cle4.